A 491-amino-acid polypeptide reads, in one-letter code: Iota-carrageenase (491 aa).

An N-terminal signal peptide occupies residues 1-23 (MRLYFRKLWLTNLFLGGALASSA). Cystine bridges form between Cys-269–Cys-298, Cys-336–Cys-360, Cys-408–Cys-476, and Cys-412–Cys-484.

Belongs to the glycosyl hydrolase 82 family.

It is found in the secreted. It carries out the reaction Endohydrolysis of 1,4-beta-D-linkages between D-galactose 4-sulfate and 3,6-anhydro-D-galactose-2-sulfate in iota-carrageenans.. Hydrolyzes iota-carrageenans, sulfated 1,3-alpha-1,4-beta galactans from red algal cell walls, with an inversion of anomeric configuration. Also active against hybrid iota-/nu-carrageenan, not active against kappa- or lambda-carrageenans. In Alteromonas macleodii (Pseudoalteromonas macleodii), this protein is Iota-carrageenase.